A 248-amino-acid polypeptide reads, in one-letter code: Pyridoxine 5'-phosphate synthase (248 aa).

Asparagine 12 contacts 3-amino-2-oxopropyl phosphate. 14–15 is a binding site for 1-deoxy-D-xylulose 5-phosphate; sequence DH. Arginine 23 serves as a coordination point for 3-amino-2-oxopropyl phosphate. Residue histidine 48 is the Proton acceptor of the active site. Residues arginine 50 and histidine 55 each coordinate 1-deoxy-D-xylulose 5-phosphate. The active-site Proton acceptor is the glutamate 75. Threonine 105 serves as a coordination point for 1-deoxy-D-xylulose 5-phosphate. Catalysis depends on histidine 196, which acts as the Proton donor. Residues glycine 197 and 218–219 contribute to the 3-amino-2-oxopropyl phosphate site; that span reads GH.

This sequence belongs to the PNP synthase family. As to quaternary structure, homooctamer; tetramer of dimers.

Its subcellular location is the cytoplasm. It carries out the reaction 3-amino-2-oxopropyl phosphate + 1-deoxy-D-xylulose 5-phosphate = pyridoxine 5'-phosphate + phosphate + 2 H2O + H(+). The protein operates within cofactor biosynthesis; pyridoxine 5'-phosphate biosynthesis; pyridoxine 5'-phosphate from D-erythrose 4-phosphate: step 5/5. In terms of biological role, catalyzes the complicated ring closure reaction between the two acyclic compounds 1-deoxy-D-xylulose-5-phosphate (DXP) and 3-amino-2-oxopropyl phosphate (1-amino-acetone-3-phosphate or AAP) to form pyridoxine 5'-phosphate (PNP) and inorganic phosphate. The chain is Pyridoxine 5'-phosphate synthase from Pseudomonas aeruginosa (strain UCBPP-PA14).